The following is a 340-amino-acid chain: Replication factor C subunit 3 (340 aa).

Ser-2 carries the post-translational modification N-acetylserine. Residues 16 to 19, Arg-20, Tyr-28, 53 to 61, Asn-148, and Arg-206 each bind ATP; these read VEKY and GPPGTGKTS.

It belongs to the activator 1 small subunits family. As to quaternary structure, replication factor C (RFC) is a heteropentamer of subunits RFC1, RFC2, RFC3, RFC4 and RFC5 and forms a complex with POL30/PCNA in the presence of ATP. Component of the RAD24-RFC complex which consists of RAD14, RFC2, RFC3, RFC4 and RFC5 and associates with the checkpoint clamp DDC1:MEC3:RAD17 complex. Component of the ELG1-RFC complex which consists of ELG1, RFC2, RFC3, RFC4 and RFC5. Component of the CTF18-RFC complex, which consists of CTF18, CTF8, DCC1, RFC2, RFC3, RFC4 and RFC5. RFC3 interacts with ECO1 and POL30/PCNA.

It is found in the nucleus. Functionally, component of ATP-dependent clamp loader (RFC and RFC-like) complexes for DNA clamps, such as the POL30/PCNA homotrimer and the checkpoint clamp DDC1:MEC3:RAD17 complex. During a clamp loading circle, the RFC:clamp complex binds to DNA and the recognition of the double-stranded/single-stranded junction stimulates ATP hydrolysis by RFC. The complex presumably provides bipartite ATP sites in which one subunit supplies a catalytic site for hydrolysis of ATP bound to the neighboring subunit. Dissociation of RFC from the clamp leaves the clamp encircling DNA. Component of the replication factor C (RFC or activator 1) complex which loads POL30/PCNA and acts during elongation of primed DNA templates by DNA polymerase delta and epsilon. RFC has an essential but redundant activity in sister chromatid cohesion establishment. Component of the RFC-like complex CTF18-RFC which is required for efficient establishment of chromosome cohesion during S-phase and may load or unload POL30/PCNA. Component of the RFC-like RAD24-RFC complex which loads the checkpoint clamp DDC1:MEC3:RAD17 complex and is involved in DNA repair pathways. Component of the RFC-like ELG1-RFC complex which appears to have a role in DNA replication, replication fork re-start, recombination and repair. RFC3 supplies a catalytic site to the ATP site of RFC4. The sequence is that of Replication factor C subunit 3 (RFC3) from Saccharomyces cerevisiae (strain ATCC 204508 / S288c) (Baker's yeast).